The following is a 348-amino-acid chain: Ferredoxin--NADP reductase (348 aa).

FAD is bound by residues Thr-26, Glu-45, Gln-53, Tyr-58, Ala-98, Phe-133, Asp-299, and Ser-340.

Belongs to the ferredoxin--NADP reductase type 2 family. In terms of assembly, homodimer. The cofactor is FAD.

It carries out the reaction 2 reduced [2Fe-2S]-[ferredoxin] + NADP(+) + H(+) = 2 oxidized [2Fe-2S]-[ferredoxin] + NADPH. The chain is Ferredoxin--NADP reductase from Prosthecochloris aestuarii (strain DSM 271 / SK 413).